Consider the following 469-residue polypeptide: MNQSQSGLKKELKTRHMTMISIAGVIGAGLFVGSGSVIHSTGPGAVVSYALAGLLVIFIMRMLGEMSAVNPTSGSFSQYAHDAIGPWAGFTIGWLYWFFWVIVIAIEAIAGAGIIQYWFHDIPLWLTSLILTIVLTLTNVYSVKSFGEFEYWFSLIKVVTIIAFLIVGFAFIFGFAPGSEPVGFSNLTGKGGFFPEGISSVLLGIVVVIFSFMGTEIVAIAAGETSNPIESVTKATRSVVWRIIVFYVGSIAIVVALLPWNSANILESPFVAVLEHIGVPAAAQIMNFIVLTAVLSCLNSGLYTTSRMLYSLAERNEAPRRFMKLSKKGVPVQAIVAGTFFSYIAVVMNYFSPDTVFLFLVNSSGAIALLVYLVIAVSQLKMRKKLEKTNPEALKIKMWLFPFLTYLTIIAICGILVSMAFIDSMRDELLLTGVITGIVLISYLVFRKRKVSEKAAANPVTQQQPDILP.

Over 1-17 (MNQSQSGLKKELKTRHM) the chain is Cytoplasmic. Residues 18–38 (TMISIAGVIGAGLFVGSGSVI) form a helical membrane-spanning segment. His-39 is a topological domain (extracellular). The helical transmembrane segment at 40 to 60 (STGPGAVVSYALAGLLVIFIM) threads the bilayer. The Cytoplasmic portion of the chain corresponds to 61–94 (RMLGEMSAVNPTSGSFSQYAHDAIGPWAGFTIGW). A helical membrane pass occupies residues 95-115 (LYWFFWVIVIAIEAIAGAGII). Residue Gln-116 is a topological domain, extracellular. A helical membrane pass occupies residues 117–137 (YWFHDIPLWLTSLILTIVLTL). The Cytoplasmic segment spans residues 138–157 (TNVYSVKSFGEFEYWFSLIK). Residues 158–178 (VVTIIAFLIVGFAFIFGFAPG) form a helical membrane-spanning segment. Residues 179-200 (SEPVGFSNLTGKGGFFPEGISS) lie on the Extracellular side of the membrane. Residues 201 to 221 (VLLGIVVVIFSFMGTEIVAIA) form a helical membrane-spanning segment. At 222-242 (AGETSNPIESVTKATRSVVWR) the chain is on the cytoplasmic side. Residues 243-263 (IIVFYVGSIAIVVALLPWNSA) form a helical membrane-spanning segment. The Extracellular segment spans residues 264-269 (NILESP). The chain crosses the membrane as a helical span at residues 270 to 290 (FVAVLEHIGVPAAAQIMNFIV). Topologically, residues 291–328 (LTAVLSCLNSGLYTTSRMLYSLAERNEAPRRFMKLSKK) are cytoplasmic. The chain crosses the membrane as a helical span at residues 329 to 349 (GVPVQAIVAGTFFSYIAVVMN). Residues 350-355 (YFSPDT) lie on the Extracellular side of the membrane. The chain crosses the membrane as a helical span at residues 356–376 (VFLFLVNSSGAIALLVYLVIA). The Cytoplasmic portion of the chain corresponds to 377-401 (VSQLKMRKKLEKTNPEALKIKMWLF). A helical transmembrane segment spans residues 402–422 (PFLTYLTIIAICGILVSMAFI). Over 423-425 (DSM) the chain is Extracellular. The helical transmembrane segment at 426–446 (RDELLLTGVITGIVLISYLVF) threads the bilayer. The Cytoplasmic portion of the chain corresponds to 447–469 (RKRKVSEKAAANPVTQQQPDILP).

The protein belongs to the amino acid-polyamine-organocation (APC) superfamily. Amino acid transporter (AAT) (TC 2.A.3.1) family.

Its subcellular location is the cell membrane. The catalysed reaction is 4-aminobutanoate(in) + H(+)(in) = 4-aminobutanoate(out) + H(+)(out). It catalyses the reaction beta-alanine(in) + H(+)(in) = beta-alanine(out) + H(+)(out). The protein operates within amino-acid degradation; 4-aminobutanoate degradation. Transporter for gamma-aminobutyrate (GABA). Can also transport beta-alanine. Can translocate several open-chain GABA analogs (3-aminobutyrate, 3-aminopropanoate, cis-4-aminobutenoate) across the membrane via counterflow against GABA, but cannot transport muscimol. Also functions as a low-affinity proline importer. In Bacillus subtilis (strain 168), this protein is Gamma-aminobutyric acid permease.